We begin with the raw amino-acid sequence, 85 residues long: Small ribosomal subunit protein bS16 (85 aa).

It belongs to the bacterial ribosomal protein bS16 family.

The protein is Small ribosomal subunit protein bS16 of Clostridium novyi (strain NT).